The following is a 493-amino-acid chain: Polyamine aminopropyltransferase 2 (493 aa).

Helical transmembrane passes span 9-29 (LCIF…ATLA), 32-52 (LLGN…LSMG), 68-88 (LAFV…VPIA), 101-121 (VIYG…PLAV), 137-157 (VLEK…YLFL), 161-181 (GLPL…FLLV), and 188-208 (KFLK…AVGH). The interval 187 to 448 (KKFLKFLAIF…PLNFENFELK (262 aa)) is spermidine synthase. Residues 202-437 (ATYAVGHKRI…GEWGMVIGSK (236 aa)) form the PABS domain. Gln233 contributes to the S-methyl-5'-thioadenosine binding site. Residues His263 and Asp287 each contribute to the spermidine site. S-methyl-5'-thioadenosine is bound by residues Asp306 and 340 to 341 (DA). Asp358 (proton acceptor) is an active-site residue.

It belongs to the spermidine/spermine synthase family. As to quaternary structure, homodimer or homotetramer.

The protein localises to the cell membrane. The catalysed reaction is S-adenosyl 3-(methylsulfanyl)propylamine + putrescine = S-methyl-5'-thioadenosine + spermidine + H(+). Its pathway is amine and polyamine biosynthesis; spermidine biosynthesis; spermidine from putrescine: step 1/1. In terms of biological role, catalyzes the irreversible transfer of a propylamine group from the amino donor S-adenosylmethioninamine (decarboxy-AdoMet) to putrescine (1,4-diaminobutane) to yield spermidine. This Aquifex aeolicus (strain VF5) protein is Polyamine aminopropyltransferase 2.